Consider the following 86-residue polypeptide: Short neurotoxin homolog NTL4 (86 aa).

The signal sequence occupies residues 1–21; it reads MKTLLLTLVVVTIICLDLGYT. Cystine bridges form between Cys24–Cys45, Cys38–Cys63, Cys67–Cys78, and Cys79–Cys84.

This sequence belongs to the three-finger toxin family. Short-chain subfamily. Orphan group III sub-subfamily. As to expression, expressed by the venom gland.

The protein resides in the secreted. The sequence is that of Short neurotoxin homolog NTL4 from Bungarus multicinctus (Many-banded krait).